Reading from the N-terminus, the 623-residue chain is Putative ABC transporter ATP-binding protein MG014 homolog (623 aa).

Positions 16–325 (LILAPLFTFA…YIVLGLILTS (310 aa)) constitute an ABC transmembrane type-1 domain. A run of 6 helical transmembrane segments spans residues 27-47 (IIID…VFSI), 86-106 (VILL…CASI), 157-177 (FLRL…FAIA), 180-200 (SDMS…IGIL), 266-286 (NIPF…LLVF), and 307-327 (IFAF…TSLT). The ABC transporter domain maps to 365 to 611 (LEFKNVAFGL…CDIYVKMKQA (247 aa)). An ATP-binding site is contributed by 400–407 (GPTGSGKS).

Belongs to the ABC transporter superfamily.

The protein resides in the cell membrane. This is Putative ABC transporter ATP-binding protein MG014 homolog from Mycoplasma pneumoniae (strain ATCC 29342 / M129 / Subtype 1) (Mycoplasmoides pneumoniae).